The chain runs to 218 residues: Large ribosomal subunit protein uL3 (218 aa).

Position 154 is an N5-methylglutamine (glutamine 154).

The protein belongs to the universal ribosomal protein uL3 family. Part of the 50S ribosomal subunit. Forms a cluster with proteins L14 and L19. In terms of processing, methylated by PrmB.

Functionally, one of the primary rRNA binding proteins, it binds directly near the 3'-end of the 23S rRNA, where it nucleates assembly of the 50S subunit. The protein is Large ribosomal subunit protein uL3 of Polynucleobacter asymbioticus (strain DSM 18221 / CIP 109841 / QLW-P1DMWA-1) (Polynucleobacter necessarius subsp. asymbioticus).